We begin with the raw amino-acid sequence, 39 residues long: Photosystem II reaction center protein J (39 aa).

Residues Ile-7 to Tyr-27 form a helical membrane-spanning segment.

Belongs to the PsbJ family. As to quaternary structure, PSII is composed of 1 copy each of membrane proteins PsbA, PsbB, PsbC, PsbD, PsbE, PsbF, PsbH, PsbI, PsbJ, PsbK, PsbL, PsbM, PsbT, PsbX, PsbY, PsbZ, Psb30/Ycf12, at least 3 peripheral proteins of the oxygen-evolving complex and a large number of cofactors. It forms dimeric complexes.

Its subcellular location is the plastid. The protein localises to the chloroplast thylakoid membrane. Its function is as follows. One of the components of the core complex of photosystem II (PSII). PSII is a light-driven water:plastoquinone oxidoreductase that uses light energy to abstract electrons from H(2)O, generating O(2) and a proton gradient subsequently used for ATP formation. It consists of a core antenna complex that captures photons, and an electron transfer chain that converts photonic excitation into a charge separation. The chain is Photosystem II reaction center protein J from Welwitschia mirabilis (Tree tumbo).